Here is a 474-residue protein sequence, read N- to C-terminus: MTSNNLPTVLESIVEGRRGHLEEIRARIAHVDVDALPKSTRSLFDSLNQGRGGARFIMECKSASPSLGMIREHYQPGEIARVYSRYASGISVLCEPDRFGGDYDHLATVAATSHLPVLCKDFIIDPVQVHAARYFGADAILLMLSVLDDEEYAALAAEAARFDLDILTEVIDEEEVARAIKLGAKIFGVNHRNLHDLSIDLDRSRRLSKLIPADAVLVSESGVRDTETVRQLGGHSNAFLVGSQLTSQENVDLAARELVYGPNKVCGLTSPSAAQTARAAGAVYGGLIFEEASPRNVSRETLQKIIAAEPNLRYVAVSRRTSGYKDLLVDGIFAVQIHAPLQDSVEAEKALIAAVREEVGPQVQVWRAISMSSPLGAEVAAAVEGDVDKLILDAHEGGSGEVFDWATVPAAVKAKSLLAGGISPDNAAQALAVGCAGLDINSGVEYPAGAGTWAGAKDAGALLKIFATISTFHY.

The tract at residues 1–262 (MTSNNLPTVL…LAARELVYGP (262 aa)) is indole-3-glycerol phosphate synthase. The segment at 263–474 (NKVCGLTSPS…IFATISTFHY (212 aa)) is N-(5'-phosphoribosyl)anthranilate isomerase.

It in the N-terminal section; belongs to the TrpC family. This sequence in the C-terminal section; belongs to the TrpF family. Monomer.

The catalysed reaction is N-(5-phospho-beta-D-ribosyl)anthranilate = 1-(2-carboxyphenylamino)-1-deoxy-D-ribulose 5-phosphate. It carries out the reaction 1-(2-carboxyphenylamino)-1-deoxy-D-ribulose 5-phosphate + H(+) = (1S,2R)-1-C-(indol-3-yl)glycerol 3-phosphate + CO2 + H2O. It functions in the pathway amino-acid biosynthesis; L-tryptophan biosynthesis; L-tryptophan from chorismate: step 3/5. It participates in amino-acid biosynthesis; L-tryptophan biosynthesis; L-tryptophan from chorismate: step 4/5. Bifunctional enzyme that catalyzes two sequential steps of tryptophan biosynthetic pathway. The first reaction is catalyzed by the isomerase, coded by the TrpF domain; the second reaction is catalyzed by the synthase, coded by the TrpC domain. The polypeptide is Tryptophan biosynthesis protein TrpCF (trpC) (Corynebacterium glutamicum (strain ATCC 13032 / DSM 20300 / JCM 1318 / BCRC 11384 / CCUG 27702 / LMG 3730 / NBRC 12168 / NCIMB 10025 / NRRL B-2784 / 534)).